A 163-amino-acid polypeptide reads, in one-letter code: uncharacterized protein (163 aa).

A helical membrane pass occupies residues 11–31; the sequence is LSWFLLLVVVILIFFLLLSCL.

It localises to the membrane. This is an uncharacterized protein from Saccharomyces cerevisiae (strain ATCC 204508 / S288c) (Baker's yeast).